The chain runs to 574 residues: Acetolactate synthase isozyme 3 large subunit (574 aa).

Glutamate 51 is a binding site for thiamine diphosphate. FAD-binding positions include arginine 153, 261 to 282, and 304 to 323; these read HGTY…VGVR and DIDP…IVGD. Positions 397–477 are thiamine pyrophosphate binding; sequence QHQMFAALYY…VLVVNLNNRY (81 aa). Aspartate 448 and asparagine 475 together coordinate Mg(2+).

It belongs to the TPP enzyme family. In terms of assembly, dimer of large and small chains. Mg(2+) serves as cofactor. It depends on thiamine diphosphate as a cofactor.

It carries out the reaction 2 pyruvate + H(+) = (2S)-2-acetolactate + CO2. It functions in the pathway amino-acid biosynthesis; L-isoleucine biosynthesis; L-isoleucine from 2-oxobutanoate: step 1/4. Its pathway is amino-acid biosynthesis; L-valine biosynthesis; L-valine from pyruvate: step 1/4. With respect to regulation, sensitive to valine inhibition. The polypeptide is Acetolactate synthase isozyme 3 large subunit (ilvI) (Escherichia coli (strain K12)).